A 165-amino-acid polypeptide reads, in one-letter code: MIYAVFIFNNKGKPRLTKFYTPIDESIQQKLIGDIYAAVSTRPPTACNFLESNLIAGKNRIIYRQYATLYFVFVVDEGESELGILDLIQVFVEALDRCFNNVCELDLVFKFQEIHAILAEVVSGGLVLETNLNEIVLAAQNQMPKTKRSNAMPFSNTLSSFATRF.

Belongs to the adaptor complexes small subunit family. Adaptor protein complex 3 (AP-3) is a heterotetramer composed of 2 large adaptins (apl5 and apl6), a medium adaptin (apm3) and a small adaptin (aps3).

It is found in the golgi apparatus. The protein resides in the cytoplasmic vesicle membrane. In terms of biological role, part of the AP-3 complex, an adaptor-related complex which is not clathrin-associated. The complex is associated with the Golgi region as well as more peripheral structures. It facilitates the budding of vesicles from the Golgi membrane and may be directly involved in trafficking to the vacuole. This is AP-3 complex subunit sigma (aps3) from Schizosaccharomyces pombe (strain 972 / ATCC 24843) (Fission yeast).